We begin with the raw amino-acid sequence, 403 residues long: Argininosuccinate synthase (403 aa).

Residues 10 to 18 (AYSGGVDTS) and Ala-38 each bind ATP. Tyr-89 serves as a coordination point for L-citrulline. Position 119 (Gly-119) interacts with ATP. L-aspartate contacts are provided by Thr-121, Asn-125, and Asp-126. Asn-125 lines the L-citrulline pocket. L-citrulline is bound by residues Arg-129, Ser-177, Ser-186, Glu-262, and Tyr-274.

The protein belongs to the argininosuccinate synthase family. Type 1 subfamily. As to quaternary structure, homotetramer.

The protein resides in the cytoplasm. The enzyme catalyses L-citrulline + L-aspartate + ATP = 2-(N(omega)-L-arginino)succinate + AMP + diphosphate + H(+). Its pathway is amino-acid biosynthesis; L-arginine biosynthesis; L-arginine from L-ornithine and carbamoyl phosphate: step 2/3. This is Argininosuccinate synthase from Synechococcus sp. (strain CC9902).